Here is a 214-residue protein sequence, read N- to C-terminus: Large ribosomal subunit protein uL16 (214 aa).

It belongs to the universal ribosomal protein uL16 family. In terms of assembly, component of the large ribosomal subunit. Mature ribosomes consist of a small (40S) and a large (60S) subunit. The 40S subunit contains about 33 different proteins and 1 molecule of RNA (18S). The 60S subunit contains about 49 different proteins and 3 molecules of RNA (28S, 5.8S and 5S).

The protein is Large ribosomal subunit protein uL16 (rpl-10L) of Caenorhabditis elegans.